Reading from the N-terminus, the 368-residue chain is MRLDSISIANFRNHTLLEFEPGHSITNIYGRNGSGKTSILEAIHYCALTRGFSGNNDREYLKFGEELFTIRSSFTSGQGIATKVSITYSPKREKRILVNEQELQTFSSHIGTIPCVTFTPREMVIINGAPAERRRFIDTAICQYDRKYLSDLLLYRRILQQRNALLSSEQDPRVIDSALDVLTDQLVAIATEIVLVRKRFIEHFTSMLGGVYQWIPEGAEPSILYQSSLGHHENLYEKDKIQQVFRERFETLKQQELQRRQTLAGPHRDDLQFYLNKREIRKYASQGQQRAFLVAMKMTLQGYLYEASGEIPITLLDDLFSELDEVVSGTMVETLATKGQVIITSTEKKKGKGISFFSVDDYKSSKEP.

Residue 30 to 37 (GRNGSGKT) coordinates ATP.

The protein belongs to the RecF family.

Its subcellular location is the cytoplasm. In terms of biological role, the RecF protein is involved in DNA metabolism; it is required for DNA replication and normal SOS inducibility. RecF binds preferentially to single-stranded, linear DNA. It also seems to bind ATP. The polypeptide is DNA replication and repair protein RecF (Chlorobaculum tepidum (strain ATCC 49652 / DSM 12025 / NBRC 103806 / TLS) (Chlorobium tepidum)).